A 421-amino-acid polypeptide reads, in one-letter code: Histidine--tRNA ligase (421 aa).

It belongs to the class-II aminoacyl-tRNA synthetase family. Homodimer.

The protein localises to the cytoplasm. The catalysed reaction is tRNA(His) + L-histidine + ATP = L-histidyl-tRNA(His) + AMP + diphosphate + H(+). This is Histidine--tRNA ligase from Ureaplasma urealyticum serovar 10 (strain ATCC 33699 / Western).